A 166-amino-acid chain; its full sequence is NAD(P)H-quinone oxidoreductase subunit I, chloroplastic (166 aa).

4Fe-4S ferredoxin-type domains are found at residues 55–84 and 95–124; these read GRIH…VDWK and LNYS…MTEE. Residues Cys-64, Cys-67, Cys-70, Cys-74, Cys-104, Cys-107, Cys-110, and Cys-114 each coordinate [4Fe-4S] cluster.

Belongs to the complex I 23 kDa subunit family. In terms of assembly, NDH is composed of at least 16 different subunits, 5 of which are encoded in the nucleus. It depends on [4Fe-4S] cluster as a cofactor.

The protein resides in the plastid. Its subcellular location is the chloroplast thylakoid membrane. The enzyme catalyses a plastoquinone + NADH + (n+1) H(+)(in) = a plastoquinol + NAD(+) + n H(+)(out). The catalysed reaction is a plastoquinone + NADPH + (n+1) H(+)(in) = a plastoquinol + NADP(+) + n H(+)(out). NDH shuttles electrons from NAD(P)H:plastoquinone, via FMN and iron-sulfur (Fe-S) centers, to quinones in the photosynthetic chain and possibly in a chloroplast respiratory chain. The immediate electron acceptor for the enzyme in this species is believed to be plastoquinone. Couples the redox reaction to proton translocation, and thus conserves the redox energy in a proton gradient. The protein is NAD(P)H-quinone oxidoreductase subunit I, chloroplastic of Stevia rebaudiana (Stevia).